A 433-amino-acid polypeptide reads, in one-letter code: Alpha-(1,3)-fucosyltransferase 4 (433 aa).

Topologically, residues 1–52 (MAPARQELQHESRCRPSRTVDAWRAAVATRGRHMETPGYRRRTRCGGWGLPR) are cytoplasmic. A helical; Signal-anchor for type II membrane protein membrane pass occupies residues 53 to 74 (SVSSLAAVGLLCTALTTFICWG). At 75–433 (QLPPLPWASP…IHNLADWFQR (359 aa)) the chain is on the lumenal side. N-linked (GlcNAc...) asparagine glycosylation is found at N117 and N218.

This sequence belongs to the glycosyltransferase 10 family. As to expression, highest expression in stomach and colon. It is also expressed in the lung, testis, uterus, small intestine and to a lesser extent in spleen, and ovary. Present in trace amounts in brain, thymus, heart, smooth muscle, kidney and bone marrow. Not found in liver, salivary gland and pancreas.

Its subcellular location is the golgi apparatus. The protein resides in the golgi stack membrane. The catalysed reaction is a beta-D-galactosyl-(1-&gt;4)-N-acetyl-beta-D-glucosaminyl derivative + GDP-beta-L-fucose = a beta-D-galactosyl-(1-&gt;4)-[alpha-L-fucosyl-(1-&gt;3)]-N-acetyl-beta-D-glucosaminyl derivative + GDP + H(+). It carries out the reaction an N-acetyl-alpha-neuraminyl-(2-&gt;3)-beta-D-galactosyl-(1-&gt;4)-N-acetyl-beta-D-glucosaminyl derivative + GDP-beta-L-fucose = an alpha-Neu5Ac-(2-&gt;3)-beta-D-Gal-(1-&gt;4)-[alpha-L-Fuc-(1-&gt;3)]-beta-D-GlcNAc derivative + GDP + H(+). The enzyme catalyses an alpha-Neu5Ac-(2-&gt;3)-beta-D-Gal-(1-&gt;4)-beta-D-GlcNAc-(1-&gt;3)-beta-D-Gal-(1-&gt;4)-beta-D-GlcNAc derivative + GDP-beta-L-fucose = an alpha-Neu5Ac-(2-&gt;3)-beta-D-Gal-(1-&gt;4)-beta-D-GlcNAc-(1-&gt;3)-beta-D-Gal-(1-&gt;4)-[alpha-L-Fuc-(1-&gt;3)]-beta-D-GlcNAc derivative + GDP + H(+). It catalyses the reaction an alpha-Neu5Ac-(2-&gt;3)-beta-D-Gal-(1-&gt;4)-beta-D-GlcNAc6S derivative + GDP-beta-L-fucose = an alpha-Neu5Ac-(2-&gt;3)-beta-D-Gal-(1-&gt;4)-[alpha-L-Fuc-(1-&gt;3)]-beta-D-GlcNAc6S derivative + GDP + H(+). It functions in the pathway protein modification; protein glycosylation. Catalyzes alpha(1-&gt;3) linkage of fucosyl moiety transferred from GDP-beta-L-fucose to N-acetyl glucosamine (GlcNAc) within type 2 lactosamine (LacNAc, Gal-beta(1-&gt;4)GlcNAc) glycan attached to N- or O-linked glycoproteins. Robustly fucosylates nonsialylated distal LacNAc unit of the polylactosamine chain to form Lewis X antigen (CD15), a glycan determinant known to mediate important cellular functions in development and immunity. Fucosylates with lower efficiency sialylated LacNAc acceptors to form sialyl Lewis X and 6-sulfo sialyl Lewis X determinants that serve as recognition epitopes for C-type lectins. Together with FUT7 contributes to SELE, SELL and SELP selectin ligand biosynthesis and selectin-dependent lymphocyte homing, leukocyte migration and blood leukocyte homeostasis. In a cell type specific manner, may also fucosylate the internal LacNAc unit of the polylactosamine chain to form VIM-2 antigen that serves as recognition epitope for SELE. The protein is Alpha-(1,3)-fucosyltransferase 4 (Fut4) of Mus musculus (Mouse).